Reading from the N-terminus, the 431-residue chain is Serine--tRNA ligase (431 aa).

Position 235–237 (235–237 (TSE)) interacts with L-serine. 266–268 (RSE) serves as a coordination point for ATP. An L-serine-binding site is contributed by Glu-289. An ATP-binding site is contributed by 353-356 (EISS). An L-serine-binding site is contributed by Ser-388.

This sequence belongs to the class-II aminoacyl-tRNA synthetase family. Type-1 seryl-tRNA synthetase subfamily. In terms of assembly, homodimer. The tRNA molecule binds across the dimer.

The protein localises to the cytoplasm. The enzyme catalyses tRNA(Ser) + L-serine + ATP = L-seryl-tRNA(Ser) + AMP + diphosphate + H(+). It catalyses the reaction tRNA(Sec) + L-serine + ATP = L-seryl-tRNA(Sec) + AMP + diphosphate + H(+). Its pathway is aminoacyl-tRNA biosynthesis; selenocysteinyl-tRNA(Sec) biosynthesis; L-seryl-tRNA(Sec) from L-serine and tRNA(Sec): step 1/1. Functionally, catalyzes the attachment of serine to tRNA(Ser). Is also able to aminoacylate tRNA(Sec) with serine, to form the misacylated tRNA L-seryl-tRNA(Sec), which will be further converted into selenocysteinyl-tRNA(Sec). In Paraburkholderia phytofirmans (strain DSM 17436 / LMG 22146 / PsJN) (Burkholderia phytofirmans), this protein is Serine--tRNA ligase.